Reading from the N-terminus, the 476-residue chain is Methylenetetrahydrofolate--tRNA-(uracil-5-)-methyltransferase TrmFO (476 aa).

13 to 18 (GGGLAG) provides a ligand contact to FAD. The segment at 425–446 (PPLESPPTHGADGKKLRGPDKT) is disordered. Positions 435–446 (ADGKKLRGPDKT) are enriched in basic and acidic residues.

It belongs to the MnmG family. TrmFO subfamily. The cofactor is FAD.

It is found in the cytoplasm. It catalyses the reaction uridine(54) in tRNA + (6R)-5,10-methylene-5,6,7,8-tetrahydrofolate + NADH + H(+) = 5-methyluridine(54) in tRNA + (6S)-5,6,7,8-tetrahydrofolate + NAD(+). The catalysed reaction is uridine(54) in tRNA + (6R)-5,10-methylene-5,6,7,8-tetrahydrofolate + NADPH + H(+) = 5-methyluridine(54) in tRNA + (6S)-5,6,7,8-tetrahydrofolate + NADP(+). Its function is as follows. Catalyzes the folate-dependent formation of 5-methyl-uridine at position 54 (M-5-U54) in all tRNAs. This chain is Methylenetetrahydrofolate--tRNA-(uracil-5-)-methyltransferase TrmFO, found in Rhodopseudomonas palustris (strain BisB18).